The chain runs to 336 residues: Probable allantoicase 2 (336 aa).

It belongs to the allantoicase family.

The enzyme catalyses allantoate + H2O = (S)-ureidoglycolate + urea. The protein operates within nitrogen metabolism; (S)-allantoin degradation; (S)-ureidoglycolate from allantoate (aminidohydrolase route): step 1/1. The polypeptide is Probable allantoicase 2 (Burkholderia mallei (strain ATCC 23344)).